The following is a 117-amino-acid chain: Large ribosomal subunit protein uL18 (117 aa).

Belongs to the universal ribosomal protein uL18 family. In terms of assembly, part of the 50S ribosomal subunit; part of the 5S rRNA/L5/L18/L25 subcomplex. Contacts the 5S and 23S rRNAs.

Its function is as follows. This is one of the proteins that bind and probably mediate the attachment of the 5S RNA into the large ribosomal subunit, where it forms part of the central protuberance. This Halorhodospira halophila (strain DSM 244 / SL1) (Ectothiorhodospira halophila (strain DSM 244 / SL1)) protein is Large ribosomal subunit protein uL18.